Consider the following 161-residue polypeptide: 6,7-dimethyl-8-ribityllumazine synthase (161 aa).

Residues Trp-25, Ala-57–Glu-59, and Val-80–Ile-82 each bind 5-amino-6-(D-ribitylamino)uracil. Residue Gly-85–Thr-86 coordinates (2S)-2-hydroxy-3-oxobutyl phosphate. His-88 serves as the catalytic Proton donor. Phe-113 is a 5-amino-6-(D-ribitylamino)uracil binding site. Arg-127 lines the (2S)-2-hydroxy-3-oxobutyl phosphate pocket.

This sequence belongs to the DMRL synthase family.

It catalyses the reaction (2S)-2-hydroxy-3-oxobutyl phosphate + 5-amino-6-(D-ribitylamino)uracil = 6,7-dimethyl-8-(1-D-ribityl)lumazine + phosphate + 2 H2O + H(+). The protein operates within cofactor biosynthesis; riboflavin biosynthesis; riboflavin from 2-hydroxy-3-oxobutyl phosphate and 5-amino-6-(D-ribitylamino)uracil: step 1/2. Catalyzes the formation of 6,7-dimethyl-8-ribityllumazine by condensation of 5-amino-6-(D-ribitylamino)uracil with 3,4-dihydroxy-2-butanone 4-phosphate. This is the penultimate step in the biosynthesis of riboflavin. The sequence is that of 6,7-dimethyl-8-ribityllumazine synthase from Kineococcus radiotolerans (strain ATCC BAA-149 / DSM 14245 / SRS30216).